The following is a 288-amino-acid chain: Small ribosomal subunit protein uS3 (288 aa).

The region spanning 38–106 (IRRMMSKGLE…QVQLNIIEVK (69 aa)) is the KH type-2 domain. The tract at residues 209 to 288 (PGRETPAEAP…TQPAETQQEG (80 aa)) is disordered. The segment covering 219 to 232 (SRPRRERGDRSERP) has biased composition (basic and acidic residues). Residues 249–264 (AGRAAATTIAQAAETP) show a composition bias toward low complexity. A compositionally biased stretch (polar residues) spans 277 to 288 (AATQPAETQQEG).

The protein belongs to the universal ribosomal protein uS3 family. As to quaternary structure, part of the 30S ribosomal subunit. Forms a tight complex with proteins S10 and S14.

Binds the lower part of the 30S subunit head. Binds mRNA in the 70S ribosome, positioning it for translation. The sequence is that of Small ribosomal subunit protein uS3 from Salinispora arenicola (strain CNS-205).